Reading from the N-terminus, the 507-residue chain is Cytochrome c-552 (507 aa).

A signal peptide spans 1-22; it reads MTKFKLLLAGSLVAIVSMGLLA. His-102, Cys-130, Cys-133, Lys-134, Cys-168, Cys-171, His-172, Cys-211, Cys-214, and His-215 together coordinate heme c. Residues Glu-217, Tyr-218, Lys-274, and Gln-276 each contribute to the Ca(2+) site. Tyr-218 serves as a coordination point for substrate. Position 277 (His-277) interacts with substrate. Heme c is bound by residues His-288, Cys-295, Cys-298, His-299, His-313, Cys-326, Cys-329, His-330, and His-405.

The protein belongs to the cytochrome c-552 family. As to quaternary structure, homodimer. Interacts with NrfH. May form a heterotetramer with NrfH. Ca(2+) is required as a cofactor. The cofactor is heme c.

It localises to the periplasm. The enzyme catalyses 6 Fe(III)-[cytochrome c] + NH4(+) + 2 H2O = 6 Fe(II)-[cytochrome c] + nitrite + 8 H(+). Its pathway is nitrogen metabolism; nitrate reduction (assimilation). In terms of biological role, catalyzes the reduction of nitrite to ammonia, consuming six electrons in the process. Has very low activity toward hydroxylamine, and even lower activity toward sulfite. Sulfite reductase activity is maximal at neutral pH. The polypeptide is Cytochrome c-552 (nrfA) (Wolinella succinogenes (strain ATCC 29543 / DSM 1740 / CCUG 13145 / JCM 31913 / LMG 7466 / NCTC 11488 / FDC 602W) (Vibrio succinogenes)).